The following is a 272-amino-acid chain: MSPATVLDSILEGVRADVAAREASVSLSEIKAAAAAAPPPLDVMAALREPGIGVIAEVKRASPSAGALATIADPAKLAQAYQDGGARIVSVVTEQRRFQGSLDDLDAVRASVSIPVLRKDFVVQPYQIHEARAHGADMLLLIVAALEQSVLVSMLDRTESLGMTALVEVHTEQEADRALKAGAKVIGVNARDLMTLDVDRDCFARIAPGLPSSVIRIAESGVRGTADLLAYAGAGADAVLVGEGLVTSGDPRAAVADLVTAGTHPSCPKPAR.

The protein belongs to the TrpC family.

It carries out the reaction 1-(2-carboxyphenylamino)-1-deoxy-D-ribulose 5-phosphate + H(+) = (1S,2R)-1-C-(indol-3-yl)glycerol 3-phosphate + CO2 + H2O. Its pathway is amino-acid biosynthesis; L-tryptophan biosynthesis; L-tryptophan from chorismate: step 4/5. In Mycobacterium tuberculosis (strain ATCC 25177 / H37Ra), this protein is Indole-3-glycerol phosphate synthase.